The following is a 281-amino-acid chain: DegV domain-containing protein (281 aa).

One can recognise a DegV domain in the interval 3–280 (WKIVSDSGCD…EGGLLMGYEI (278 aa)). The hexadecanoate site is built by S63 and S91.

In terms of biological role, may bind long-chain fatty acids, such as palmitate, and may play a role in lipid transport or fatty acid metabolism. The chain is DegV domain-containing protein from Streptococcus gordonii.